Reading from the N-terminus, the 462-residue chain is Tubulin gamma-1 chain (462 aa).

142–148 (AGGTGSG) contributes to the GTP binding site.

Belongs to the tubulin family.

Its subcellular location is the cytoplasm. It localises to the cytoskeleton. The protein resides in the microtubule organizing center. It is found in the centrosome. Functionally, tubulin is the major constituent of microtubules. The gamma chain is found at microtubule organizing centers (MTOC) such as the spindle poles or the centrosome, suggesting that it is involved in the minus-end nucleation of microtubule assembly. The polypeptide is Tubulin gamma-1 chain (Euplotes crassus).